Reading from the N-terminus, the 498-residue chain is MRINPTTSGSGVSTLEKKTLGRIVQIIGPVLDVAFPPGKMPNIYNALVVKGRDTVGQQINVTCEVQQLLGNNRVRAVAMSATDGLMRGMEVIDTGAPLSVPVGGATLGRIFNVLGEPVDNLGPVDTRTTSPIHRSAPAFIQLDTKLSIFETGIKVVDLLAPYRRGGKIGLFGGAGVGKTVLIMELINNIAKAHGGVSVFGGVGERTREGNDLYMEMKESGVINEQNIAESKVALVHGQMNEPPGARMRVGLTALTMAEYFRDVNEQDVLLFIDNIFRFVQAGSEVSALLGRMPSAVGYQPTLSTEMGSLQERITSTKEGSITSIQAVYVPADDLTDPAPATTFAHLDATTVLSRGLAAKGIYPAVDPLDSTSTMLQPRIVGEEHYEIAQRVKQTSQRYKELQDIIAILGLDELSEEDRLTVARARKIERFLSQPFFVAEVFTGSPGKYVGLAETIRGFQLILSGELDGLPEQAFYLVGNIDEATAKAMNLEVESTLKK.

Position 172-179 (172-179 (GGAGVGKT)) interacts with ATP.

Belongs to the ATPase alpha/beta chains family. As to quaternary structure, F-type ATPases have 2 components, CF(1) - the catalytic core - and CF(0) - the membrane proton channel. CF(1) has five subunits: alpha(3), beta(3), gamma(1), delta(1), epsilon(1). CF(0) has four main subunits: a(1), b(1), b'(1) and c(9-12).

Its subcellular location is the plastid. The protein resides in the chloroplast thylakoid membrane. It catalyses the reaction ATP + H2O + 4 H(+)(in) = ADP + phosphate + 5 H(+)(out). Its function is as follows. Produces ATP from ADP in the presence of a proton gradient across the membrane. The catalytic sites are hosted primarily by the beta subunits. This chain is ATP synthase subunit beta, chloroplastic, found in Calycanthus floridus (Eastern sweetshrub).